A 445-amino-acid polypeptide reads, in one-letter code: mRNA cleavage and polyadenylation factor CLP1 (445 aa).

ATP-binding positions include D33, K72, and 133-138; that span reads QTGKTS.

This sequence belongs to the Clp1 family. Clp1 subfamily. In terms of assembly, component of the cleavage factor IA (CF IA) complex, which is a heterohexameric complex with 2:2:1:1 stoichiometry of RNA14, RNA15, PCF11 and CLP1. It contains 2 copies of an RNA14-RNA15 dimer and 1 copy of CLP1-PCF11. The complex interacts with the cleavage factor HRB1/CF IB to form the cleavage factor I (CF I) complex, and binds to RNA. Interacts directly with PCF11. Interacts with the CPF components CFT1, PTA1, PFS2, YSH1 and SSU72.

It is found in the nucleus. In terms of biological role, component of the cleavage factor IA (CF IA) complex, which is involved in the endonucleolytic cleavage during polyadenylation-dependent pre-mRNA 3'-end formation. Associates with HRB1/CF IB to form the cleavage factor I (CF I) complex. CF I is required for correct positioning of a larger protein complex, the cleavage and polyadenylation factor (CPF) complex, which contains the catalytic subunits executing mRNA cleavage and polyadenylation. CLP1 mediates interactions between CF IA and CPF factors. CLP1 is also involved in maintaining the CF IA interaction with the C-terminal domain of RNA Pol II largest subunit via PCF11, which links pre-mRNA 3'-end processing to transcription termination. This chain is mRNA cleavage and polyadenylation factor CLP1, found in Saccharomyces cerevisiae (strain YJM789) (Baker's yeast).